A 434-amino-acid polypeptide reads, in one-letter code: Gamma-enolase (434 aa).

At S2 the chain carries N-acetylserine. The residue at position 5 (K5) is an N6-acetyllysine. At T26 the chain carries Phosphothreonine. S40 lines the Mg(2+) pocket. Y44 carries the post-translational modification Phosphotyrosine. K60 is modified (N6-acetyllysine; alternate). Position 60 is an N6-succinyllysine; alternate (K60). The residue at position 64 (K64) is an N6-acetyllysine. K89 is modified (N6-acetyllysine; alternate). K89 carries the post-translational modification N6-succinyllysine; alternate. Residues H158 and E167 each coordinate substrate. K193, K197, and K199 each carry N6-acetyllysine. K202 carries the N6-acetyllysine; alternate modification. Residue K202 forms a Glycyl lysine isopeptide (Lys-Gly) (interchain with G-Cter in SUMO2); alternate linkage. Residue E210 is the Proton donor of the active site. An N6-acetyllysine; alternate mark is found at K228 and K233. The residue at position 228 (K228) is an N6-succinyllysine; alternate. K233 is modified (N6-(2-hydroxyisobutyryl)lysine; alternate). Position 245 (D245) interacts with Mg(2+). Position 256 is an N6-acetyllysine (K256). Residue S263 is modified to Phosphoserine. A Phosphotyrosine modification is found at Y287. Position 291 is a phosphoserine (S291). Mg(2+) contacts are provided by E293 and D318. 2 residues coordinate substrate: E293 and D318. 2 positions are modified to N6-acetyllysine: K335 and K343. The active-site Proton acceptor is K343. Residues 370–373 (SHRS) and K394 contribute to the substrate site. K406 carries the N6-acetyllysine modification.

It belongs to the enolase family. In terms of assembly, mammalian enolase is composed of 3 isozyme subunits, alpha, beta and gamma, which can form homodimers or heterodimers which are cell-type and development-specific. The cofactor is Mg(2+). In terms of tissue distribution, the alpha/alpha homodimer is expressed in embryo and in most adult tissues. The alpha/beta heterodimer and the beta/beta homodimer are found in striated muscle, and the alpha/gamma heterodimer and the gamma/gamma homodimer in neurons.

Its subcellular location is the cytoplasm. It is found in the cell membrane. It carries out the reaction (2R)-2-phosphoglycerate = phosphoenolpyruvate + H2O. Its pathway is carbohydrate degradation; glycolysis; pyruvate from D-glyceraldehyde 3-phosphate: step 4/5. Functionally, has neurotrophic and neuroprotective properties on a broad spectrum of central nervous system (CNS) neurons. Binds, in a calcium-dependent manner, to cultured neocortical neurons and promotes cell survival. The sequence is that of Gamma-enolase (ENO2) from Homo sapiens (Human).